The chain runs to 390 residues: Stearoyl-[acyl-carrier-protein] 9-desaturase, chloroplastic (390 aa).

The transit peptide at methionine 1–methionine 27 directs the protein to the chloroplast. Fe cation contacts are provided by glutamate 132, glutamate 170, histidine 173, glutamate 223, glutamate 256, and histidine 259.

This sequence belongs to the fatty acid desaturase type 2 family. In terms of assembly, homodimer. The cofactor is Fe(2+).

Its subcellular location is the plastid. The protein localises to the chloroplast. The catalysed reaction is octadecanoyl-[ACP] + 2 reduced [2Fe-2S]-[ferredoxin] + O2 + 2 H(+) = (9Z)-octadecenoyl-[ACP] + 2 oxidized [2Fe-2S]-[ferredoxin] + 2 H2O. It functions in the pathway lipid metabolism; fatty acid metabolism. In terms of biological role, converts stearoyl-ACP to oleoyl-ACP by introduction of a cis double bond between carbons 9 and 10 of the acyl chain. The chain is Stearoyl-[acyl-carrier-protein] 9-desaturase, chloroplastic from Olea europaea (Common olive).